The following is a 207-amino-acid chain: Interleukin-6 (207 aa).

The N-terminal stretch at 1 to 20 (MNSLSTSAFSLGLLLVMATA) is a signal peptide. An intrachain disulfide couples C67 to C73. S76 bears the Phosphoserine mark. The cysteines at positions 96 and 106 are disulfide-linked.

Belongs to the IL-6 superfamily. In terms of assembly, component of a hexamer of two molecules each of IL6, IL6R and IL6ST; first binds to IL6R to associate with the signaling subunit IL6ST. Interacts with IL6R (via the N-terminal ectodomain); this interaction may be affected by IL6R-binding with SORL1, hence decreasing IL6 cis signaling. Interacts with SORL1 (via the N-terminal ectodomain); this interaction leads to IL6 internalization and lysosomal degradation. May form a trimeric complex with the soluble SORL1 ectodomain and soluble IL6R receptor; this interaction might stabilize circulating IL6, hence promoting IL6 trans signaling.

Its subcellular location is the secreted. Cytokine with a wide variety of biological functions in immunity, tissue regeneration, and metabolism. Binds to IL6R, then the complex associates to the signaling subunit IL6ST/gp130 to trigger the intracellular IL6-signaling pathway. The interaction with the membrane-bound IL6R and IL6ST stimulates 'classic signaling', whereas the binding of IL6 and soluble IL6R to IL6ST stimulates 'trans-signaling'. Alternatively, 'cluster signaling' occurs when membrane-bound IL6:IL6R complexes on transmitter cells activate IL6ST receptors on neighboring receiver cells. Functionally, IL6 is a potent inducer of the acute phase response. Rapid production of IL6 contributes to host defense during infection and tissue injury, but excessive IL6 synthesis is involved in disease pathology. In the innate immune response, is synthesized by myeloid cells, such as macrophages and dendritic cells, upon recognition of pathogens through toll-like receptors (TLRs) at the site of infection or tissue injury. In the adaptive immune response, is required for the differentiation of B cells into immunoglobulin-secreting cells. Plays a major role in the differentiation of CD4(+) T cell subsets. Essential factor for the development of T follicular helper (Tfh) cells that are required for the induction of germinal-center formation. Required to drive naive CD4(+) T cells to the Th17 lineage. Also required for proliferation of myeloma cells and the survival of plasmablast cells. Its function is as follows. Acts as an essential factor in bone homeostasis and on vessels directly or indirectly by induction of VEGF, resulting in increased angiogenesis activity and vascular permeability. Induces, through 'trans-signaling' and synergistically with IL1B and TNF, the production of VEGF. Involved in metabolic controls, is discharged into the bloodstream after muscle contraction increasing lipolysis and improving insulin resistance. 'Trans-signaling' in central nervous system also regulates energy and glucose homeostasis. Mediates, through GLP-1, crosstalk between insulin-sensitive tissues, intestinal L cells and pancreatic islets to adapt to changes in insulin demand. Also acts as a myokine. Plays a protective role during liver injury, being required for maintenance of tissue regeneration. Also has a pivotal role in iron metabolism by regulating HAMP/hepcidin expression upon inflammation or bacterial infection. Through activation of IL6ST-YAP-NOTCH pathway, induces inflammation-induced epithelial regeneration. The chain is Interleukin-6 (IL6) from Vulpes vulpes (Red fox).